Consider the following 648-residue polypeptide: Macrolide export ATP-binding/permease protein MacB 1 (648 aa).

Positions 6–244 (LQLSGIRRHF…PAPTTSRADT (239 aa)) constitute an ABC transporter domain. 42–49 (GASGSGKS) is a binding site for ATP. The disordered stretch occupies residues 222-248 (VVADRRREPTPPSPAPTTSRADTGGRG). Transmembrane regions (helical) follow at residues 273-293 (FLTM…VALG), 521-541 (LTLL…IGVM), 578-598 (LVCL…GVLF), and 613-633 (AVLM…FFPA).

It belongs to the ABC transporter superfamily. Macrolide exporter (TC 3.A.1.122) family. In terms of assembly, homodimer. Part of the tripartite efflux system MacAB-TolC, which is composed of an inner membrane transporter, MacB, a periplasmic membrane fusion protein, MacA, and an outer membrane component, TolC. The complex forms a large protein conduit and can translocate molecules across both the inner and outer membranes. Interacts with MacA.

Its subcellular location is the cell inner membrane. Part of the tripartite efflux system MacAB-TolC. MacB is a non-canonical ABC transporter that contains transmembrane domains (TMD), which form a pore in the inner membrane, and an ATP-binding domain (NBD), which is responsible for energy generation. Confers resistance against macrolides. This is Macrolide export ATP-binding/permease protein MacB 1 from Aeromonas hydrophila subsp. hydrophila (strain ATCC 7966 / DSM 30187 / BCRC 13018 / CCUG 14551 / JCM 1027 / KCTC 2358 / NCIMB 9240 / NCTC 8049).